A 488-amino-acid chain; its full sequence is Beta-xylosidase (488 aa).

Glu-163 (proton donor) is an active-site residue. Catalysis depends on Glu-275, which acts as the Nucleophile.

The protein belongs to the glycosyl hydrolase 39 family.

It carries out the reaction Hydrolysis of (1-&gt;4)-beta-D-xylans, to remove successive D-xylose residues from the non-reducing termini.. Beta-xylosidase is an intracellular xylan-degrading enzyme. The sequence is that of Beta-xylosidase (xynB) from Caldicellulosiruptor saccharolyticus (Caldocellum saccharolyticum).